The primary structure comprises 207 residues: Small ribosomal subunit protein uS4 (207 aa).

In terms of domain architecture, S4 RNA-binding spans 96-156 (RRLDNVVYRL…EKFKTSSFIA (61 aa)).

It belongs to the universal ribosomal protein uS4 family. In terms of assembly, part of the 30S ribosomal subunit. Contacts protein S5. The interaction surface between S4 and S5 is involved in control of translational fidelity.

In terms of biological role, one of the primary rRNA binding proteins, it binds directly to 16S rRNA where it nucleates assembly of the body of the 30S subunit. With S5 and S12 plays an important role in translational accuracy. In Leptospira interrogans serogroup Icterohaemorrhagiae serovar copenhageni (strain Fiocruz L1-130), this protein is Small ribosomal subunit protein uS4.